Here is a 1702-residue protein sequence, read N- to C-terminus: DNA polymerase (1702 aa).

2 consecutive DOD-type homing endonuclease domains span residues 776 to 909 (LLGY…SLGI) and 1229 to 1368 (LVGL…IVGI).

Belongs to the DNA polymerase type-B family. In terms of processing, this protein undergoes a protein self splicing that involves a post-translational excision of the two intervening regions (inteins) followed by peptide ligation.

It catalyses the reaction DNA(n) + a 2'-deoxyribonucleoside 5'-triphosphate = DNA(n+1) + diphosphate. In addition to polymerase activity, this DNA polymerase exhibits 3' to 5' exonuclease activity. Functionally, intein encoded endonucleases are thought to mediate intein mobility by site-specific recombination initiated by endonuclease cleavage at the 'homing site' in gene that lack the intein. This chain is DNA polymerase (pol), found in Thermococcus litoralis.